Consider the following 65-residue polypeptide: Large ribosomal subunit protein uL30 (65 aa).

This sequence belongs to the universal ribosomal protein uL30 family. In terms of assembly, part of the 50S ribosomal subunit.

This chain is Large ribosomal subunit protein uL30, found in Rickettsia bellii (strain OSU 85-389).